The following is a 204-amino-acid chain: Holliday junction branch migration complex subunit RuvA (204 aa).

Residues 1 to 64 (MIGRLQGILL…EDAHLLFGFA (64 aa)) form a domain I region. The tract at residues 65–143 (QKTDRTLFRE…GVKQSDFFVE (79 aa)) is domain II. The tract at residues 144–155 (STHIPLSPSIES) is flexible linker. The segment at 156–204 (HSESSSDEAISALIALGYKPAEAEKMVKRVAKPELTSEQVIREALKAAL) is domain III.

This sequence belongs to the RuvA family. Homotetramer. Forms an RuvA(8)-RuvB(12)-Holliday junction (HJ) complex. HJ DNA is sandwiched between 2 RuvA tetramers; dsDNA enters through RuvA and exits via RuvB. An RuvB hexamer assembles on each DNA strand where it exits the tetramer. Each RuvB hexamer is contacted by two RuvA subunits (via domain III) on 2 adjacent RuvB subunits; this complex drives branch migration. In the full resolvosome a probable DNA-RuvA(4)-RuvB(12)-RuvC(2) complex forms which resolves the HJ.

The protein localises to the cytoplasm. Its function is as follows. The RuvA-RuvB-RuvC complex processes Holliday junction (HJ) DNA during genetic recombination and DNA repair, while the RuvA-RuvB complex plays an important role in the rescue of blocked DNA replication forks via replication fork reversal (RFR). RuvA specifically binds to HJ cruciform DNA, conferring on it an open structure. The RuvB hexamer acts as an ATP-dependent pump, pulling dsDNA into and through the RuvAB complex. HJ branch migration allows RuvC to scan DNA until it finds its consensus sequence, where it cleaves and resolves the cruciform DNA. The sequence is that of Holliday junction branch migration complex subunit RuvA from Haemophilus influenzae (strain PittGG).